The following is a 505-amino-acid chain: Glucan endo-1,3-beta-glucosidase 2 (505 aa).

The first 20 residues, 1–20, serve as a signal peptide directing secretion; that stretch reads MASLLHLLLLSLSLLVLASA. An N-linked (GlcNAc...) asparagine glycan is attached at Asn-97. Glu-125 functions as the Proton donor in the catalytic mechanism. N-linked (GlcNAc...) asparagine glycosylation is found at Asn-180 and Asn-262. The active-site Nucleophile is the Glu-272. N-linked (GlcNAc...) asparagine glycosylation is found at Asn-304, Asn-361, and Asn-365. Cysteines 369 and 432 form a disulfide. 3 N-linked (GlcNAc...) asparagine glycosylation sites follow: Asn-461, Asn-466, and Asn-473. A lipid anchor (GPI-anchor amidated serine) is attached at Ser-477. The propeptide at 478–505 is removed in mature form; the sequence is SGIRSDLYYSRGIWSILTVMILNVANIL.

The protein belongs to the glycosyl hydrolase 17 family. Contains two additional disulfide bonds.

It is found in the cell membrane. The enzyme catalyses Hydrolysis of (1-&gt;3)-beta-D-glucosidic linkages in (1-&gt;3)-beta-D-glucans.. This chain is Glucan endo-1,3-beta-glucosidase 2, found in Arabidopsis thaliana (Mouse-ear cress).